The sequence spans 917 residues: Protein FAN (917 aa).

Positions 176 to 247 (RLARTSFDKN…QDVRRIYKRR (72 aa)) constitute a GRAM domain. Positions 189 to 286 (NISEKLHMEC…DRDDLYFYIA (98 aa)) constitute a BEACH-type PH domain. The region spanning 290 to 575 (EHHVAEHTAE…QLFVTPHPRR (286 aa)) is the BEACH domain. WD repeat units follow at residues 628 to 658 (IHKE…KMFS), 670 to 700 (FSNM…YFYS), 712 to 740 (GHDD…KVWS), 761 to 791 (EHDV…NIWD), 803 to 833 (CHSG…NVID), and 884 to 914 (GHTG…IFWK).

Ubiquitous.

Its function is as follows. Couples the p55 TNF-receptor (TNF-R55 / TNFR1) to neutral sphingomyelinase (N-SMASE). Specifically binds to the N-smase activation domain of TNF-R55. May regulate ceramide production by N-SMASE. The chain is Protein FAN (NSMAF) from Homo sapiens (Human).